The primary structure comprises 1289 residues: uncharacterized protein (1289 aa).

The N-terminal stretch at Met1–His23 is a signal peptide. In terms of domain architecture, LTD spans Glu141–Asp277.

This is an uncharacterized protein from Bacillus subtilis (strain 168).